We begin with the raw amino-acid sequence, 510 residues long: NAD(P)H-quinone oxidoreductase subunit 2, chloroplastic (510 aa).

Helical transmembrane passes span 24–44 (LLLF…GLIL), 59–79 (WFYF…LFRW), 99–119 (IFQF…VEYI), 124–144 (MAIT…MFLC), 149–169 (LITI…LSGY), 183–203 (YLLM…WLYG), 229–249 (ISIA…PAPF), 295–315 (WHLL…LIAI), 323–343 (MLAY…IVGD), 354–374 (YMLF…LFGL), 395–415 (ALSS…AGFF), and 418–438 (LYLF…IGLL).

The protein belongs to the complex I subunit 2 family. As to quaternary structure, NDH is composed of at least 16 different subunits, 5 of which are encoded in the nucleus.

The protein resides in the plastid. It localises to the chloroplast thylakoid membrane. It catalyses the reaction a plastoquinone + NADH + (n+1) H(+)(in) = a plastoquinol + NAD(+) + n H(+)(out). The catalysed reaction is a plastoquinone + NADPH + (n+1) H(+)(in) = a plastoquinol + NADP(+) + n H(+)(out). In terms of biological role, NDH shuttles electrons from NAD(P)H:plastoquinone, via FMN and iron-sulfur (Fe-S) centers, to quinones in the photosynthetic chain and possibly in a chloroplast respiratory chain. The immediate electron acceptor for the enzyme in this species is believed to be plastoquinone. Couples the redox reaction to proton translocation, and thus conserves the redox energy in a proton gradient. This Ananas comosus (Pineapple) protein is NAD(P)H-quinone oxidoreductase subunit 2, chloroplastic.